The sequence spans 272 residues: Putative pyruvate, phosphate dikinase regulatory protein (272 aa).

Residue 153–160 (GVSRTSKT) participates in ADP binding.

It belongs to the pyruvate, phosphate/water dikinase regulatory protein family. PDRP subfamily.

The enzyme catalyses N(tele)-phospho-L-histidyl/L-threonyl-[pyruvate, phosphate dikinase] + ADP = N(tele)-phospho-L-histidyl/O-phospho-L-threonyl-[pyruvate, phosphate dikinase] + AMP + H(+). The catalysed reaction is N(tele)-phospho-L-histidyl/O-phospho-L-threonyl-[pyruvate, phosphate dikinase] + phosphate + H(+) = N(tele)-phospho-L-histidyl/L-threonyl-[pyruvate, phosphate dikinase] + diphosphate. Functionally, bifunctional serine/threonine kinase and phosphorylase involved in the regulation of the pyruvate, phosphate dikinase (PPDK) by catalyzing its phosphorylation/dephosphorylation. In Chelativorans sp. (strain BNC1), this protein is Putative pyruvate, phosphate dikinase regulatory protein.